A 160-amino-acid polypeptide reads, in one-letter code: Phosphopantetheine adenylyltransferase (160 aa).

A substrate-binding site is contributed by Thr10. ATP-binding positions include 10-11 (TF) and His18. Residues Lys42, Leu74, and Arg88 each coordinate substrate. ATP-binding positions include 89–91 (GLR), Glu99, and 124–130 (NSFISST).

It belongs to the bacterial CoaD family. In terms of assembly, homohexamer. Mg(2+) serves as cofactor.

The protein localises to the cytoplasm. The enzyme catalyses (R)-4'-phosphopantetheine + ATP + H(+) = 3'-dephospho-CoA + diphosphate. It participates in cofactor biosynthesis; coenzyme A biosynthesis; CoA from (R)-pantothenate: step 4/5. In terms of biological role, reversibly transfers an adenylyl group from ATP to 4'-phosphopantetheine, yielding dephospho-CoA (dPCoA) and pyrophosphate. This is Phosphopantetheine adenylyltransferase from Photobacterium damsela subsp. piscicida (Pasteurella piscicida).